Here is a 255-residue protein sequence, read N- to C-terminus: Thiazole synthase (255 aa).

K96 acts as the Schiff-base intermediate with DXP in catalysis. 1-deoxy-D-xylulose 5-phosphate-binding positions include G157, 183–184, and 205–206; these read AG and NT.

It belongs to the ThiG family. As to quaternary structure, homotetramer. Forms heterodimers with either ThiH or ThiS.

It localises to the cytoplasm. The catalysed reaction is [ThiS sulfur-carrier protein]-C-terminal-Gly-aminoethanethioate + 2-iminoacetate + 1-deoxy-D-xylulose 5-phosphate = [ThiS sulfur-carrier protein]-C-terminal Gly-Gly + 2-[(2R,5Z)-2-carboxy-4-methylthiazol-5(2H)-ylidene]ethyl phosphate + 2 H2O + H(+). It participates in cofactor biosynthesis; thiamine diphosphate biosynthesis. Functionally, catalyzes the rearrangement of 1-deoxy-D-xylulose 5-phosphate (DXP) to produce the thiazole phosphate moiety of thiamine. Sulfur is provided by the thiocarboxylate moiety of the carrier protein ThiS. In vitro, sulfur can be provided by H(2)S. The sequence is that of Thiazole synthase from Geobacillus sp. (strain WCH70).